We begin with the raw amino-acid sequence, 160 residues long: RNA-binding protein 3 (160 aa).

The 79-residue stretch at 6 to 84 (GKLFVGGLNF…RQIRVDHAGK (79 aa)) folds into the RRM domain. R47 carries the post-translational modification Omega-N-methylarginine. Residues 81-116 (HAGKSARGSRGGAFGSYERGRGYPRGGGDQGYGSGR) form a disordered region. Residues 103-114 (YPRGGGDQGYGS) are compositionally biased toward gly residues. R105 carries the post-translational modification Asymmetric dimethylarginine; alternate. Residue R105 is modified to Dimethylated arginine; alternate. The residue at position 105 (R105) is an Omega-N-methylarginine; alternate. An omega-N-methylarginine mark is found at R120 and R134. The tract at residues 135–160 (SRDYGGRSQGGYDRYSGGNYRDNYDN) is disordered. S150 carries the post-translational modification Phosphoserine. A Phosphotyrosine modification is found at Y158.

As to quaternary structure, interacts with RPL4. Associates with the 60S ribosomal subunits.

It is found in the nucleus. It localises to the cytoplasm. The protein resides in the cell projection. The protein localises to the dendrite. Its function is as follows. Cold-inducible mRNA binding protein that enhances global protein synthesis at both physiological and mild hypothermic temperatures. Reduces the relative abundance of microRNAs, when overexpressed. Enhances phosphorylation of translation initiation factors and active polysome formation. This chain is RNA-binding protein 3, found in Capra hircus (Goat).